Here is a 179-residue protein sequence, read N- to C-terminus: Adenine phosphoribosyltransferase (179 aa).

This sequence belongs to the purine/pyrimidine phosphoribosyltransferase family. Homodimer.

It localises to the cytoplasm. The enzyme catalyses AMP + diphosphate = 5-phospho-alpha-D-ribose 1-diphosphate + adenine. The protein operates within purine metabolism; AMP biosynthesis via salvage pathway; AMP from adenine: step 1/1. In terms of biological role, catalyzes a salvage reaction resulting in the formation of AMP, that is energically less costly than de novo synthesis. The polypeptide is Adenine phosphoribosyltransferase (Nitrobacter hamburgensis (strain DSM 10229 / NCIMB 13809 / X14)).